Reading from the N-terminus, the 76-residue chain is Zinc finger protein 706 (76 aa).

Residues 1 to 13 show a composition bias toward low complexity; it reads MARGQQKIQSQQK. Disordered regions lie at residues 1-32 and 53-76; these read MARG…QKAA and TFKQ…DVQA. Positions 14–25 are enriched in basic residues; sequence NAKKQAGQKKKQ. The segment at 39–62 adopts a C2H2-type zinc-finger fold; that stretch reads YTCTVCRTQMPDPKTFKQHFESKH. The segment covering 53–62 has biased composition (basic and acidic residues); the sequence is TFKQHFESKH.

It localises to the cytoplasm. It is found in the nucleus. Its function is as follows. Transcription repressor involved in the exit of embryonic stem cells (ESCs) from self-renewal. Acts by repressing expression of KLF4. The sequence is that of Zinc finger protein 706 from Homo sapiens (Human).